A 228-amino-acid chain; its full sequence is Ras-related protein Rab-33B (228 aa).

Positions 41, 42, 43, 44, 45, 46, 60, and 63 each coordinate GTP. Threonine 45 is a binding site for Mg(2+). Positions 54–66 (GRFPQRTEATIGV) match the Switch 1 motif. Residues threonine 63 and aspartate 86 each coordinate Mg(2+). The Switch 2 motif lies at 87–106 (TAGQERFRKSMVQHYYRNVH). Positions 89, 146, 147, 149, 177, and 178 each coordinate GTP. S-geranylgeranyl cysteine attachment occurs at residues cysteine 226 and cysteine 228. At cysteine 228 the chain carries Cysteine methyl ester.

Belongs to the small GTPase superfamily. Rab family. As to quaternary structure, interacts (GTP- and GDP-bound forms) with ATG16L1; the complex consists of a tetramer where two RAB33B molecules bind independently one molecule of the ATG16L1 homodimer; the interaction promotes ATG12-ATG5-ATG16L1 complex recruitment to phagophores. Interacts with ATG16L2; however interaction is approximately hundred times lower than for ATG16L1. Interacts with RIC1 (via C-terminus domain); the interaction is direct with a preference for RAB33B-GTP. Interacts with RGP1. Mg(2+) serves as cofactor.

It is found in the golgi apparatus membrane. The protein localises to the golgi apparatus. Its subcellular location is the cis-Golgi network. It localises to the preautophagosomal structure membrane. The enzyme catalyses GTP + H2O = GDP + phosphate + H(+). Regulated by guanine nucleotide exchange factors (GEFs) which promote the exchange of bound GDP for free GTP. Regulated by GTPase activating proteins (GAPs) such as SGSM2 which increase the GTP hydrolysis activity. Inhibited by GDP dissociation inhibitors (GDIs). The small GTPases Rab are key regulators of intracellular membrane trafficking, from the formation of transport vesicles to their fusion with membranes. Rabs cycle between an inactive GDP-bound form and an active GTP-bound form that is able to recruit to membranes different sets of downstream effectors directly responsible for vesicle formation, movement, tethering and fusion. RAB33B acts, in coordination with RAB6A, to regulate intra-Golgi retrograde trafficking. Participates in autophagosome formation by recruiting the ATG12-ATG5-ATG16L1 complex to phagophores, probably in a nucleotide-independent manner. In Gallus gallus (Chicken), this protein is Ras-related protein Rab-33B (RAB33B).